The chain runs to 216 residues: GTP cyclohydrolase 1 (216 aa).

Zn(2+) contacts are provided by cysteine 108, histidine 111, and cysteine 179.

This sequence belongs to the GTP cyclohydrolase I family. As to quaternary structure, toroid-shaped homodecamer, composed of two pentamers of five dimers.

It carries out the reaction GTP + H2O = 7,8-dihydroneopterin 3'-triphosphate + formate + H(+). It participates in cofactor biosynthesis; 7,8-dihydroneopterin triphosphate biosynthesis; 7,8-dihydroneopterin triphosphate from GTP: step 1/1. The polypeptide is GTP cyclohydrolase 1 (Shewanella sp. (strain ANA-3)).